Reading from the N-terminus, the 557-residue chain is Organic cation/carnitine transporter 2 (557 aa).

The Cytoplasmic segment spans residues 1–20 (MRDYDEVTAFLGEWGPFQRL). A helical membrane pass occupies residues 21–41 (IFFLLSASIIPNGFNGMSIVF). Residues 42–142 (LAGTPEHRCL…DLVCKDDWKA (101 aa)) are Extracellular-facing. Asparagine 57, asparagine 64, and asparagine 91 each carry an N-linked (GlcNAc...) asparagine glycan. The helical transmembrane segment at 143-163 (PLTTSLFFVGVLMGSFISGQL) threads the bilayer. Over 164-172 (SDRFGRKNV) the chain is Cytoplasmic. The chain crosses the membrane as a helical span at residues 173 to 193 (LFLTMGMQTGFSFLQLFSVNF). The Extracellular portion of the chain corresponds to 194-197 (EMFT). The chain crosses the membrane as a helical span at residues 198–218 (VLFVLVGMGQISNYVAAFVLG). 218 to 225 (GTEILSKS) is a binding site for ATP. The Cytoplasmic portion of the chain corresponds to 219–232 (TEILSKSIRIIFAT). A helical transmembrane segment spans residues 233-253 (LGVCIFYAFGFMVLPLFAYFI). The Extracellular segment spans residues 254 to 257 (RDWR). A helical transmembrane segment spans residues 258–278 (MLLLALTVPGVLCGALWWFIP). The Cytoplasmic segment spans residues 279-341 (ESPRWLISQG…YDLVRTRNIR (63 aa)). Residues 342–362 (IITIMSIILWLTISVGYFGLS) traverse the membrane as a helical segment. The Extracellular segment spans residues 363–373 (LDTPNLHGDIY). A helical transmembrane segment spans residues 374–394 (VNCFLLAAVEVPAYVLAWLLL). Residues 395–406 (QHLPRRYSISAA) lie on the Cytoplasmic side of the membrane. A helical membrane pass occupies residues 407 to 427 (LFLGGSVLLFIQLVPSELFYL). At 428 to 430 (STA) the chain is on the extracellular side. Residues 431 to 451 (LVMVGKFGITSAYSMVYVYTA) form a helical membrane-spanning segment. The Cytoplasmic portion of the chain corresponds to 452 to 462 (ELYPTVVRNMG). Residues 463–483 (VGVSSTASRLGSILSPYFVYL) traverse the membrane as a helical segment. At 484-488 (GAYDR) the chain is on the extracellular side. Tyrosine 486 is subject to Phosphotyrosine. The helical transmembrane segment at 489–509 (FLPYILMGSLTILTAILTLFF) threads the bilayer. The Cytoplasmic portion of the chain corresponds to 510 to 557 (PESFGAPLPDTIDQMLRVKGIKQWQIQSQTRTQKDGGESPTVLKSTAF). The disordered stretch occupies residues 537-557 (SQTRTQKDGGESPTVLKSTAF). Serine 548 carries the phosphoserine modification. Threonine 550 carries the post-translational modification Phosphothreonine.

The protein belongs to the major facilitator (TC 2.A.1) superfamily. Organic cation transporter (TC 2.A.1.19) family. In terms of assembly, interacts with PDZK1. In terms of tissue distribution, expressed in the proximal and distal tubules and in the glomeruli in the kidney, in the myocardium, valves, and arterioles in the heart, in the labyrinthine layer of the placenta, and in the cortex, hippocampus, and cerebellum in the brain. Expressed in Sertoli cells in testis.

It is found in the cell membrane. It localises to the apical cell membrane. The protein resides in the basal cell membrane. The catalysed reaction is (R)-carnitine(out) + Na(+)(out) = (R)-carnitine(in) + Na(+)(in). The enzyme catalyses O-acetyl-(R)-carnitine(out) + Na(+)(out) = O-acetyl-(R)-carnitine(in) + Na(+)(in). It catalyses the reaction O-propanoyl-(R)-carnitine(out) + Na(+)(out) = O-propanoyl-(R)-carnitine(in) + Na(+)(in). It carries out the reaction glycine betaine(out) + Na(+)(out) = glycine betaine(in) + Na(+)(in). The catalysed reaction is glycine betaine(out) + (R)-carnitine(in) = glycine betaine(in) + (R)-carnitine(out). The enzyme catalyses O-butanoyl-(R)-carnitine(out) + Na(+)(out) = O-butanoyl-(R)-carnitine(in) + Na(+)(in). It catalyses the reaction (S)-carnitine(out) + Na(+)(out) = (S)-carnitine(in) + Na(+)(in). It carries out the reaction an O-acyl-(R)-carnitine(out) + Na(+)(out) = an O-acyl-(R)-carnitine(in) + Na(+)(in). The catalysed reaction is L-glutamyl-L-arginyl-glycyl-L-methionyl-L-threonine(out) + Na(+)(out) = L-glutamyl-L-arginyl-glycyl-L-methionyl-L-threonine(in) + Na(+)(in). The enzyme catalyses N,N-dimethylglycine(out) + Na(+)(out) = N,N-dimethylglycine(in) + Na(+)(in). With respect to regulation, inhibited by emetine, quinidine and verapamil. The IC(50) of emetine is 4.2 uM. Not inhibited by valproic acid. Transport of (R)-carnitine is stimulated by cholesterol in the plasma membrane. Functionally, sodium-ion dependent, high affinity carnitine transporter. Involved in the active cellular uptake of carnitine. Transports one sodium ion with one molecule of carnitine. Also transports organic cations such as tetraethylammonium (TEA) without the involvement of sodium. Also relative uptake activity ratio of carnitine to TEA is 11.3. May also contribute to regulate the transport of organic compounds in testis across the blood-testis-barrier. This chain is Organic cation/carnitine transporter 2 (Slc22a5), found in Rattus norvegicus (Rat).